A 102-amino-acid chain; its full sequence is Bowman-Birk type wound-induced proteinase inhibitor WIP1 (102 aa).

Residues 1-15 form the signal peptide; sequence MKSSPHLVLILCLQA. 5 disulfides stabilise this stretch: C46–C102, C47–C60, C50–C98, C67–C74, and C71–C90.

The protein belongs to the Bowman-Birk serine protease inhibitor family.

The sequence is that of Bowman-Birk type wound-induced proteinase inhibitor WIP1 (WIP1) from Zea mays (Maize).